Consider the following 187-residue polypeptide: Biogenesis of lysosome-related organelles complex 1 subunit 5 (187 aa).

A disordered region spans residues Met1–Leu26. At Ser2 the chain carries N-acetylserine. The stretch at Asn154–Thr186 forms a coiled coil.

It belongs to the BLOC1S5 family. In terms of assembly, interacts with BLOC1S4, DTNBP1/BLOC1S7 and PI4K2A. Component of the biogenesis of lysosome-related organelles complex 1 (BLOC-1) composed of BLOC1S1, BLOC1S2, BLOC1S3, BLOC1S4, BLOC1S5, BLOC1S6, DTNBP1/BLOC1S7 and SNAPIN/BLOC1S8. Octamer composed of one copy each BLOC1S1, BLOC1S2, BLOC1S3, BLOC1S4, BLOC1S5, BLOC1S6, DTNBP1/BLOC1S7 and SNAPIN/BLOC1S8. The BLOC-1 complex associates with the AP-3 protein complex and membrane protein cargos. Interacts with BLOC1S6.

In terms of biological role, component of the BLOC-1 complex, a complex that is required for normal biogenesis of lysosome-related organelles (LRO), such as platelet dense granules and melanosomes. In concert with the AP-3 complex, the BLOC-1 complex is required to target membrane protein cargos into vesicles assembled at cell bodies for delivery into neurites and nerve terminals. The BLOC-1 complex, in association with SNARE proteins, is also proposed to be involved in neurite extension. Plays a role in intracellular vesicle trafficking. The chain is Biogenesis of lysosome-related organelles complex 1 subunit 5 from Homo sapiens (Human).